The chain runs to 829 residues: Isethionate sulfite-lyase (829 aa).

Residues 31 to 699 form the PFL domain; the sequence is ERVFNILDSF…VVSATPNGRL (669 aa). 2-hydroxyethane-1-sulfonate-binding positions include R188, Q192, 467 to 469, and R677; that span reads CTE. The active-site Cysteine radical intermediate is the C467. The active-site Proton acceptor is E469. A Glycine radical domain is found at 706–829; the sequence is DGSSASHGAD…LIARTQHDAM (124 aa). G804 is modified (glycine radical).

It belongs to the glycyl radical enzyme (GRE) family. As to quaternary structure, homodimer. Requires the activating protein IslB to generate the key active site glycyl radical on Gly-804 that is involved in catalysis.

It carries out the reaction 2-hydroxyethane-1-sulfonate = acetaldehyde + sulfite + H(+). Its pathway is organosulfur degradation; alkanesulfonate degradation. Functionally, involved in an anaerobic respiration pathway that converts the sulfonate isethionate (2-hydroxyethanesulfonate) to ammonia, acetate and sulfide. Catalyzes the radical-mediated C-S bond cleavage of isethionate (2-hydroxyethanesulfonate) to form sulfite and acetaldehyde. The chain is Isethionate sulfite-lyase from Oleidesulfovibrio alaskensis (strain ATCC BAA-1058 / DSM 17464 / G20) (Desulfovibrio alaskensis).